The following is a 400-amino-acid chain: Chorismate synthase (400 aa).

NADP(+) is bound by residues Arg-40 and Arg-46. FMN-binding positions include 135–137, 257–258, Gly-301, 316–320, and Arg-342; these read RAS, QA, and KPIST.

The protein belongs to the chorismate synthase family. Homotetramer. The cofactor is FMNH2.

The enzyme catalyses 5-O-(1-carboxyvinyl)-3-phosphoshikimate = chorismate + phosphate. The protein operates within metabolic intermediate biosynthesis; chorismate biosynthesis; chorismate from D-erythrose 4-phosphate and phosphoenolpyruvate: step 7/7. Functionally, catalyzes the anti-1,4-elimination of the C-3 phosphate and the C-6 proR hydrogen from 5-enolpyruvylshikimate-3-phosphate (EPSP) to yield chorismate, which is the branch point compound that serves as the starting substrate for the three terminal pathways of aromatic amino acid biosynthesis. This reaction introduces a second double bond into the aromatic ring system. The polypeptide is Chorismate synthase (Tropheryma whipplei (strain TW08/27) (Whipple's bacillus)).